Consider the following 211-residue polypeptide: Small ribosomal subunit protein uS4 (211 aa).

Positions Arg98–Leu161 constitute an S4 RNA-binding domain.

Belongs to the universal ribosomal protein uS4 family. Part of the 30S ribosomal subunit. Contacts protein S5. The interaction surface between S4 and S5 is involved in control of translational fidelity.

Functionally, one of the primary rRNA binding proteins, it binds directly to 16S rRNA where it nucleates assembly of the body of the 30S subunit. In terms of biological role, with S5 and S12 plays an important role in translational accuracy. The chain is Small ribosomal subunit protein uS4 from Aquifex aeolicus (strain VF5).